A 478-amino-acid polypeptide reads, in one-letter code: Flotillin-like protein 1 (478 aa).

C35 carries S-palmitoyl cysteine lipidation. Positions 235–277 form a coiled coil; that stretch reads ENQREAEVAEANSELAKKKAAWTMAAQVAELEAAKAVALREAE.

It belongs to the band 7/mec-2 family. Flotillin subfamily. May be palmitoylated. In terms of tissue distribution, expressed in all plant organs. Primarily expressed in vascular tissues. No change in spatial expression in root upon inoculation. Expression limited to the nodule vascular tissue.

The protein resides in the cell membrane. Its subcellular location is the membrane. The protein localises to the caveola. In terms of biological role, may act as a scaffolding protein within caveolar membranes, functionally participating in formation of caveolae or caveolae-like vesicles. May be involved in nodule formation. The protein is Flotillin-like protein 1 (FLOT1) of Medicago truncatula (Barrel medic).